A 311-amino-acid polypeptide reads, in one-letter code: Small ribosomal subunit biogenesis GTPase RsgA (311 aa).

One can recognise a CP-type G domain in the interval Ser88 to Phe246. Residues Asn137–Asp140 and Gly188–Thr196 each bind GTP. Cys270, Cys275, His277, and Cys283 together coordinate Zn(2+).

The protein belongs to the TRAFAC class YlqF/YawG GTPase family. RsgA subfamily. In terms of assembly, monomer. Associates with 30S ribosomal subunit, binds 16S rRNA. The cofactor is Zn(2+).

Its subcellular location is the cytoplasm. Its function is as follows. One of several proteins that assist in the late maturation steps of the functional core of the 30S ribosomal subunit. Helps release RbfA from mature subunits. May play a role in the assembly of ribosomal proteins into the subunit. Circularly permuted GTPase that catalyzes slow GTP hydrolysis, GTPase activity is stimulated by the 30S ribosomal subunit. This Chlorobaculum parvum (strain DSM 263 / NCIMB 8327) (Chlorobium vibrioforme subsp. thiosulfatophilum) protein is Small ribosomal subunit biogenesis GTPase RsgA.